A 106-amino-acid chain; its full sequence is YcgL domain-containing protein PsycPRwf_1721 (106 aa).

The 94-residue stretch at 1-94 folds into the YcgL domain; it reads MHCDIYKFPK…PSDVLLAQAQ (94 aa).

This is YcgL domain-containing protein PsycPRwf_1721 from Psychrobacter sp. (strain PRwf-1).